The following is a 205-amino-acid chain: Large ribosomal subunit protein uL3 (205 aa).

Belongs to the universal ribosomal protein uL3 family. In terms of assembly, part of the 50S ribosomal subunit. Forms a cluster with proteins L14 and L19.

One of the primary rRNA binding proteins, it binds directly near the 3'-end of the 23S rRNA, where it nucleates assembly of the 50S subunit. This is Large ribosomal subunit protein uL3 from Thermosipho africanus (strain TCF52B).